The sequence spans 290 residues: Beta-lactamase OXY-2 (290 aa).

The N-terminal stretch at 1–27 is a signal peptide; that stretch reads MIKSSWRKIAMLAAAVPLLLASGALWA. The Acyl-ester intermediate role is filled by Ser72. Residue 236–238 coordinates substrate; it reads KTG.

It belongs to the class-A beta-lactamase family.

The enzyme catalyses a beta-lactam + H2O = a substituted beta-amino acid. In terms of biological role, hydrolyzes broad-spectrum beta-lactam antibiotics. Active against all third-generation cephalosporins but ceftazidime. This Klebsiella oxytoca protein is Beta-lactamase OXY-2 (bla).